Reading from the N-terminus, the 148-residue chain is 6,7-dimethyl-8-ribityllumazine synthase (148 aa).

Residues F13, 44-46, and 73-75 contribute to the 5-amino-6-(D-ribitylamino)uracil site; these read ALE and MVI. 78-79 is a binding site for (2S)-2-hydroxy-3-oxobutyl phosphate; the sequence is ET. The active-site Proton donor is the H81. N106 serves as a coordination point for 5-amino-6-(D-ribitylamino)uracil. R120 contributes to the (2S)-2-hydroxy-3-oxobutyl phosphate binding site.

Belongs to the DMRL synthase family.

The enzyme catalyses (2S)-2-hydroxy-3-oxobutyl phosphate + 5-amino-6-(D-ribitylamino)uracil = 6,7-dimethyl-8-(1-D-ribityl)lumazine + phosphate + 2 H2O + H(+). It functions in the pathway cofactor biosynthesis; riboflavin biosynthesis; riboflavin from 2-hydroxy-3-oxobutyl phosphate and 5-amino-6-(D-ribitylamino)uracil: step 1/2. In terms of biological role, catalyzes the formation of 6,7-dimethyl-8-ribityllumazine by condensation of 5-amino-6-(D-ribitylamino)uracil with 3,4-dihydroxy-2-butanone 4-phosphate. This is the penultimate step in the biosynthesis of riboflavin. This chain is 6,7-dimethyl-8-ribityllumazine synthase, found in Agrobacterium fabrum (strain C58 / ATCC 33970) (Agrobacterium tumefaciens (strain C58)).